The primary structure comprises 829 residues: Leucine--tRNA ligase (829 aa).

The 'HIGH' region signature appears at 34-44 (PYPSGNIHMGH). The 'KMSKS' region motif lies at 591-595 (KMSKS). Lysine 594 is a binding site for ATP.

The protein belongs to the class-I aminoacyl-tRNA synthetase family.

It localises to the cytoplasm. It catalyses the reaction tRNA(Leu) + L-leucine + ATP = L-leucyl-tRNA(Leu) + AMP + diphosphate. The sequence is that of Leucine--tRNA ligase from Ehrlichia canis (strain Jake).